Consider the following 319-residue polypeptide: Lipoyl synthase (319 aa).

Residues 1–29 (MVVVVDTVSDKPIRPRHPEKAARPDALSP) are disordered. The span at 8 to 29 (VSDKPIRPRHPEKAARPDALSP) shows a compositional bias: basic and acidic residues. 7 residues coordinate [4Fe-4S] cluster: Cys61, Cys66, Cys72, Cys87, Cys91, Cys94, and Ser300. The 217-residue stretch at 73-289 (WDRKHATFMI…ESLAYAKGFL (217 aa)) folds into the Radical SAM core domain.

The protein belongs to the radical SAM superfamily. Lipoyl synthase family. The cofactor is [4Fe-4S] cluster.

The protein localises to the cytoplasm. The enzyme catalyses [[Fe-S] cluster scaffold protein carrying a second [4Fe-4S](2+) cluster] + N(6)-octanoyl-L-lysyl-[protein] + 2 oxidized [2Fe-2S]-[ferredoxin] + 2 S-adenosyl-L-methionine + 4 H(+) = [[Fe-S] cluster scaffold protein] + N(6)-[(R)-dihydrolipoyl]-L-lysyl-[protein] + 4 Fe(3+) + 2 hydrogen sulfide + 2 5'-deoxyadenosine + 2 L-methionine + 2 reduced [2Fe-2S]-[ferredoxin]. The protein operates within protein modification; protein lipoylation via endogenous pathway; protein N(6)-(lipoyl)lysine from octanoyl-[acyl-carrier-protein]: step 2/2. In terms of biological role, catalyzes the radical-mediated insertion of two sulfur atoms into the C-6 and C-8 positions of the octanoyl moiety bound to the lipoyl domains of lipoate-dependent enzymes, thereby converting the octanoylated domains into lipoylated derivatives. The protein is Lipoyl synthase of Rhodopseudomonas palustris (strain BisA53).